The following is a 189-amino-acid chain: Ion-translocating oxidoreductase complex subunit B (189 aa).

Residues 1 to 26 (MSGIFIAIILLTILALLFGILLGFAA) are hydrophobic. Positions 32 to 90 (EGDPLVDQLEALLPQTQCGQCGYPGCRPYAEAIANGEKINLCPPGGSATMEKLAEMAGV) constitute a 4Fe-4S domain. [4Fe-4S] cluster-binding residues include Cys49, Cys52, Cys57, Cys73, Cys114, Cys117, Cys120, Cys124, Cys144, Cys147, Cys150, and Cys154. 2 consecutive 4Fe-4S ferredoxin-type domains span residues 105 to 134 (KVAYIREEECIGCTKCIQACPVDAILGSGK) and 135 to 164 (LMHTVITDYCTGCDLCVAPCPVDCIDMLPV).

The protein belongs to the 4Fe4S bacterial-type ferredoxin family. RnfB subfamily. As to quaternary structure, the complex is composed of six subunits: RnfA, RnfB, RnfC, RnfD, RnfE and RnfG. [4Fe-4S] cluster is required as a cofactor.

It localises to the cell inner membrane. In terms of biological role, part of a membrane-bound complex that couples electron transfer with translocation of ions across the membrane. The sequence is that of Ion-translocating oxidoreductase complex subunit B from Shewanella sediminis (strain HAW-EB3).